A 221-amino-acid chain; its full sequence is Thiol:disulfide interchange protein TlpA (221 aa).

Residues 1–11 lie on the Cytoplasmic side of the membrane; it reads MLDTKPSATRR. Residues 12-35 form a helical membrane-spanning segment; sequence IPLVIATVAVGGLAGFAALYGLGL. Topologically, residues 36 to 221 are periplasmic; the sequence is SRAPTGDPAC…AATGKAAAAL (186 aa). 2 disulfides stabilise this stretch: Cys-45–Cys-190 and Cys-107–Cys-110. The Thioredoxin domain maps to 69–215; it reads ASAPLKLPDL…ALKLIRAATG (147 aa).

The protein belongs to the thioredoxin family. In terms of assembly, monomer.

The protein localises to the cell membrane. Functionally, involved in cytochrome aa3 assembly. The sequence is that of Thiol:disulfide interchange protein TlpA (tlpA) from Bradyrhizobium diazoefficiens (strain JCM 10833 / BCRC 13528 / IAM 13628 / NBRC 14792 / USDA 110).